Here is a 471-residue protein sequence, read N- to C-terminus: 7-dehydrocholesterol reductase (471 aa).

The tract at residues 1 to 23 (MASKSQHNAPKVKSPNGKAGSQG) is disordered. The residue at position 14 (Ser-14) is a Phosphoserine. A run of 8 helical transmembrane segments spans residues 36–56 (LASI…FIMA), 95–115 (LYAL…DFCH), 144–164 (LQAW…LSWF), 173–193 (WIPL…FAMI), 233–253 (LFFN…SFAA), 262–282 (VTNS…DFFW), 302–322 (LGWG…LYLV), and 327–347 (QLST…YYIF). NADP(+) is bound by residues Lys-354, Arg-358, Leu-391, Trp-396, and 403 to 404 (NY). A helical transmembrane segment spans residues 416 to 436 (LACGGGHLLPYFYIIYMTILL). NADP(+) is bound by residues Asp-443, 447–451 (CANKY), and Tyr-458.

Belongs to the ERG4/ERG24 family. As to quaternary structure, interacts with DHCR24; this interaction regulates DHCR7 activity. Interacts with TMEM147.

The protein resides in the endoplasmic reticulum membrane. The enzyme catalyses cholesterol + NADP(+) = 7-dehydrocholesterol + NADPH + H(+). The catalysed reaction is 7-dehydrodesmosterol + NADPH + H(+) = desmosterol + NADP(+). It catalyses the reaction 5,6alpha-epoxy-5alpha-cholestan-3beta-ol + H2O = 5alpha-cholestane-3beta,5,6beta-triol. It carries out the reaction 5,6beta-epoxy-5beta-cholestan-3beta-ol + H2O = 5alpha-cholestane-3beta,5,6beta-triol. The protein operates within steroid biosynthesis; cholesterol biosynthesis. Oxidoreductase that catalyzes the last step of the cholesterol synthesis pathway, which transforms cholesta-5,7-dien-3beta-ol (7-dehydrocholesterol,7-DHC) into cholesterol by reducing the C7-C8 double bond of its sterol core. Can also metabolize cholesta-5,7,24-trien-3beta-ol (7-dehydrodemosterol, 7-DHD) to desmosterol, which is then metabolized by the Delta(24)-sterol reductase (DHCR24) to cholesterol. Modulates ferroptosis (a form of regulated cell death driven by iron-dependent lipid peroxidation) through the metabolic breakdown of the anti-ferroptotic metabolites 7-DHC and 7-DHD which, when accumulated, divert the propagation of peroxyl radical-mediated damage from phospholipid components to its sterol core, protecting plasma and mitochondrial membranes from phospholipid autoxidation. Functionally, component of the microsomal antiestrogen binding site (AEBS), a multiproteic complex at the ER membrane that consists of an association between cholestenol Delta-isomerase/EBP and DHCR7. This complex is responsible for cholesterol-5,6-epoxide hydrolase (ChEH) activity, which consists in the hydration of cholesterol-5,6-epoxides (5,6-EC) into cholestane-3beta,5alpha,6beta-triol (CT). The precise role of each component of this complex has not been described yet. The polypeptide is 7-dehydrocholesterol reductase (Dhcr7) (Mus musculus (Mouse)).